The chain runs to 132 residues: MSDIPSDLHYTAEHEWIRRSREDTVRVGLTDFAQSTLGDVVFVQLPEVGAELAAGKSFGEVESTKSVSDLYAPVSGTVSAVNTDLEGSPQLVNSDPYGAGWLLDVHVSDVGALESAIATLLDAETYRGTLTK.

One can recognise a Lipoyl-binding domain in the interval 24–106 (TVRVGLTDFA…YGAGWLLDVH (83 aa)). Lysine 65 bears the N6-lipoyllysine mark.

This sequence belongs to the GcvH family. The glycine cleavage system is composed of four proteins: P, T, L and H. The cofactor is (R)-lipoate.

Its function is as follows. The glycine cleavage system catalyzes the degradation of glycine. The H protein shuttles the methylamine group of glycine from the P protein to the T protein. This Mycobacterium leprae (strain Br4923) protein is Glycine cleavage system H protein.